The following is a 273-amino-acid chain: Putative phosphoenolpyruvate synthase regulatory protein (273 aa).

153–160 (GVSRCGKT) is an ADP binding site.

This sequence belongs to the pyruvate, phosphate/water dikinase regulatory protein family. PSRP subfamily.

The enzyme catalyses [pyruvate, water dikinase] + ADP = [pyruvate, water dikinase]-phosphate + AMP + H(+). It carries out the reaction [pyruvate, water dikinase]-phosphate + phosphate + H(+) = [pyruvate, water dikinase] + diphosphate. Functionally, bifunctional serine/threonine kinase and phosphorylase involved in the regulation of the phosphoenolpyruvate synthase (PEPS) by catalyzing its phosphorylation/dephosphorylation. In Pectobacterium atrosepticum (strain SCRI 1043 / ATCC BAA-672) (Erwinia carotovora subsp. atroseptica), this protein is Putative phosphoenolpyruvate synthase regulatory protein.